Reading from the N-terminus, the 989-residue chain is Putative transcription elongation factor SPT5 homolog 2 (989 aa).

The span at 1 to 26 shows a compositional bias: acidic residues; it reads MSQYSDDDYSHEDDSEMEDEDEEDEY. The tract at residues 1-82 is disordered; it reads MSQYSDDDYS…VEDDDDDVDV (82 aa). A compositionally biased stretch (basic residues) spans 31-42; that stretch reads SRKGRSGKKRGR. Over residues 65 to 82 the composition is skewed to acidic residues; that stretch reads WEVEVDDDVEDDDDDVDV. KOW domains are found at residues 260–287, 412–439, 464–491, 588–615, and 683–710; these read DLSR…VDNV, HFMK…VDEE, YFEP…VDQH, VVAV…IYKG, and DHLV…VKDK. Residues 790-852 form a disordered region; sequence MSPPRDNWED…SPMTPSSTSY (63 aa). Over residues 842-852 the composition is skewed to low complexity; it reads PSPMTPSSTSY. The 28-residue stretch at 936 to 963 folds into the KOW 6 domain; the sequence is CPKKNERVKILGGKYCGSTAKVIGEDGQ.

This sequence belongs to the SPT5 family.

The protein resides in the nucleus. Its function is as follows. May regulate transcription elongation by RNA polymerase II. May enhance transcriptional pausing at sites proximal to the promoter, which may in turn facilitate the assembly of an elongation competent RNA polymerase II complex. The protein is Putative transcription elongation factor SPT5 homolog 2 of Arabidopsis thaliana (Mouse-ear cress).